The following is a 525-amino-acid chain: Protein BSP1 (525 aa).

4 disordered regions span residues 21–40 (INKP…TPIE), 98–262 (QQQH…PSKM), 285–325 (LSSE…VPPK), and 339–525 (DKTG…PTKI). The segment covering 110–122 (IEPVRHIIPDRHS) has biased composition (basic and acidic residues). Residues 148–162 (NRASSENVVKSTTSA) show a composition bias toward polar residues. Basic and acidic residues-rich tracts occupy residues 171-182 (YKDDITAKKLDV), 201-223 (DKNK…EDNK), and 230-242 (KDQD…KPTR). Residues 251–261 (QLKSPPQSPSK) show a composition bias toward polar residues. A compositionally biased stretch (low complexity) spans 285–297 (LSSEENSRSSLSE). Composition is skewed to basic and acidic residues over residues 314–325 (KAEKKKPVVPPK) and 339–354 (DKTG…EPEF). The segment covering 382 to 398 (QNLSKNTENKKSVAQSK) has biased composition (polar residues). Positions 447–456 (EESEISDSEP) are enriched in acidic residues. Residues 510-525 (NKSRSRGPKRKLPTKI) show a composition bias toward basic residues.

The protein resides in the cell membrane. It is found in the cytoplasm. Its subcellular location is the cytoskeleton. The protein localises to the actin patch. Functionally, cortical patch protein involved in endocytosis. This is Protein BSP1 (BSP1) from Candida glabrata (strain ATCC 2001 / BCRC 20586 / JCM 3761 / NBRC 0622 / NRRL Y-65 / CBS 138) (Yeast).